The chain runs to 54 residues: uncharacterized protein (54 aa).

A helical membrane pass occupies residues 32-52 (LFSLLVLIILCFIDPILFYFI).

The protein localises to the host membrane. This is an uncharacterized protein from Cassava vein mosaic virus (CsVMV).